A 496-amino-acid polypeptide reads, in one-letter code: Fusarielin biosynthesis cluster transcription factor FSL7 (496 aa).

Positions 16-46 (CDRCHELKIRCTRTGGTESRCDRCEKNDIDC) form a DNA-binding region, zn(2)-C6 fungal-type. 5 disordered regions span residues 57 to 102 (PKSQ…SINS), 189 to 224 (RSIN…EDQM), 281 to 307 (ANHT…QSRS), 348 to 379 (GSTS…KPRT), and 444 to 470 (MTRE…AQAA). Polar residues-rich tracts occupy residues 65-89 (GPNT…QEQM) and 207-218 (ELQSTQSASGSP). The segment covering 281–294 (ANHTSSSSSSNSTT) has biased composition (low complexity). Polar residues predominate over residues 355–379 (YNDTTAHPSSASLPSQTGGPTKPRT). Positions 444–460 (MTREQHVSTGHGPDRHT) are enriched in basic and acidic residues.

It localises to the nucleus. Its function is as follows. Transcription regulator that specifically up-regulates the gene cluster that mediates the biosynthesis of fusarielins F, G and H, decaketide compounds with 5 methylations and a decaline core that act as mycoestrogens as they stimulate growth of MCF-7 breast cancer cells. Probably binds the 5'-CGGNNNCCG-3' motif present in the promoter of all the cluster genes. The chain is Fusarielin biosynthesis cluster transcription factor FSL7 from Gibberella zeae (strain ATCC MYA-4620 / CBS 123657 / FGSC 9075 / NRRL 31084 / PH-1) (Wheat head blight fungus).